The following is a 372-amino-acid chain: MALRFEILHQSKKSRARVGRIETAHGYIDTPAFVPVATNGALKGVLDHSNIPLMFCNTYHLIVHPGAEAIAAMGGLHQFIGRNAPIITDSGGFQIFSLAYGSVAEEIKSCGKKKGGNTIIKVNDDGVHFKSYRDGRKLFLSPEISVQAQKDLGADIILPLDELLPFHADPTYFHQSSQRTYVWEKRSLDYHLKNPGIQSMYGVIHGGTFPDQRKLGCKFVEDLPFDGSAIGGSLGKNLQDIVEVVGVTAANLSAERPRHLLGIGDLPSIWATVGFGIDSFDSSYPTKAARHGMILTLQGPLKINNQRYSSDLNPIEPGCSCLACSQGITRAYLRHLFKVHEPNAGIWASIHNMHHMQKVMREIREGILNDRI.

Asp89 serves as the catalytic Proton acceptor. Residues 89–93 (DSGGF), Asp161, and Gly232 contribute to the substrate site. Residues 262–268 (GIGDLPS) are RNA binding. Catalysis depends on Asp281, which acts as the Nucleophile. The interval 286–290 (TKAAR) is RNA binding; important for wobble base 34 recognition. Zn(2+)-binding residues include Cys319, Cys321, Cys324, and His351.

This sequence belongs to the queuine tRNA-ribosyltransferase family. As to quaternary structure, homodimer. Within each dimer, one monomer is responsible for RNA recognition and catalysis, while the other monomer binds to the replacement base PreQ1. Zn(2+) serves as cofactor.

It catalyses the reaction 7-aminomethyl-7-carbaguanine + guanosine(34) in tRNA = 7-aminomethyl-7-carbaguanosine(34) in tRNA + guanine. Its pathway is tRNA modification; tRNA-queuosine biosynthesis. In terms of biological role, catalyzes the base-exchange of a guanine (G) residue with the queuine precursor 7-aminomethyl-7-deazaguanine (PreQ1) at position 34 (anticodon wobble position) in tRNAs with GU(N) anticodons (tRNA-Asp, -Asn, -His and -Tyr). Catalysis occurs through a double-displacement mechanism. The nucleophile active site attacks the C1' of nucleotide 34 to detach the guanine base from the RNA, forming a covalent enzyme-RNA intermediate. The proton acceptor active site deprotonates the incoming PreQ1, allowing a nucleophilic attack on the C1' of the ribose to form the product. After dissociation, two additional enzymatic reactions on the tRNA convert PreQ1 to queuine (Q), resulting in the hypermodified nucleoside queuosine (7-(((4,5-cis-dihydroxy-2-cyclopenten-1-yl)amino)methyl)-7-deazaguanosine). This is Queuine tRNA-ribosyltransferase from Chlamydia trachomatis serovar A (strain ATCC VR-571B / DSM 19440 / HAR-13).